A 576-amino-acid polypeptide reads, in one-letter code: Formate--tetrahydrofolate ligase 2 (576 aa).

Threonine 69–threonine 76 contacts ATP.

This sequence belongs to the formate--tetrahydrofolate ligase family.

The catalysed reaction is (6S)-5,6,7,8-tetrahydrofolate + formate + ATP = (6R)-10-formyltetrahydrofolate + ADP + phosphate. It functions in the pathway one-carbon metabolism; tetrahydrofolate interconversion. The chain is Formate--tetrahydrofolate ligase 2 from Rubrobacter xylanophilus (strain DSM 9941 / JCM 11954 / NBRC 16129 / PRD-1).